The sequence spans 147 residues: 3-dehydroquinate dehydratase (147 aa).

Tyrosine 24 functions as the Proton acceptor in the catalytic mechanism. Substrate contacts are provided by asparagine 74, histidine 80, and aspartate 87. Histidine 100 serves as the catalytic Proton donor. Substrate is bound by residues 101–102 (LS) and arginine 111.

This sequence belongs to the type-II 3-dehydroquinase family. Homododecamer.

It carries out the reaction 3-dehydroquinate = 3-dehydroshikimate + H2O. Its pathway is metabolic intermediate biosynthesis; chorismate biosynthesis; chorismate from D-erythrose 4-phosphate and phosphoenolpyruvate: step 3/7. Its function is as follows. Catalyzes a trans-dehydration via an enolate intermediate. This Azorhizobium caulinodans (strain ATCC 43989 / DSM 5975 / JCM 20966 / LMG 6465 / NBRC 14845 / NCIMB 13405 / ORS 571) protein is 3-dehydroquinate dehydratase.